Reading from the N-terminus, the 451-residue chain is Bifunctional protein GlmU (451 aa).

Residues 1–229 form a pyrophosphorylase region; it reads MQRNAVILAA…FNEIMGVNDR (229 aa). Residues 8–11, Lys22, Gln72, and 77–78 each bind UDP-N-acetyl-alpha-D-glucosamine; these read LAAG and GT. Residue Asp102 participates in Mg(2+) binding. Residues Gly139, Glu154, and Asn227 each contribute to the UDP-N-acetyl-alpha-D-glucosamine site. Asn227 contacts Mg(2+). A linker region spans residues 230–250; it reads VMLSNAEKALQQRINIEHMRN. Positions 251–451 are N-acetyltransferase; that stretch reads GVTIIDPTTT…QITKEGYLKK (201 aa). UDP-N-acetyl-alpha-D-glucosamine-binding residues include Arg332 and Lys350. His362 acts as the Proton acceptor in catalysis. The UDP-N-acetyl-alpha-D-glucosamine site is built by Tyr365 and Asn376. Residues 385-386, Ala422, and Arg439 each bind acetyl-CoA; that span reads NY.

The protein in the N-terminal section; belongs to the N-acetylglucosamine-1-phosphate uridyltransferase family. It in the C-terminal section; belongs to the transferase hexapeptide repeat family. Homotrimer. Mg(2+) is required as a cofactor.

It is found in the cytoplasm. It catalyses the reaction alpha-D-glucosamine 1-phosphate + acetyl-CoA = N-acetyl-alpha-D-glucosamine 1-phosphate + CoA + H(+). It carries out the reaction N-acetyl-alpha-D-glucosamine 1-phosphate + UTP + H(+) = UDP-N-acetyl-alpha-D-glucosamine + diphosphate. The protein operates within nucleotide-sugar biosynthesis; UDP-N-acetyl-alpha-D-glucosamine biosynthesis; N-acetyl-alpha-D-glucosamine 1-phosphate from alpha-D-glucosamine 6-phosphate (route II): step 2/2. It participates in nucleotide-sugar biosynthesis; UDP-N-acetyl-alpha-D-glucosamine biosynthesis; UDP-N-acetyl-alpha-D-glucosamine from N-acetyl-alpha-D-glucosamine 1-phosphate: step 1/1. Its pathway is bacterial outer membrane biogenesis; LPS lipid A biosynthesis. Catalyzes the last two sequential reactions in the de novo biosynthetic pathway for UDP-N-acetylglucosamine (UDP-GlcNAc). The C-terminal domain catalyzes the transfer of acetyl group from acetyl coenzyme A to glucosamine-1-phosphate (GlcN-1-P) to produce N-acetylglucosamine-1-phosphate (GlcNAc-1-P), which is converted into UDP-GlcNAc by the transfer of uridine 5-monophosphate (from uridine 5-triphosphate), a reaction catalyzed by the N-terminal domain. The polypeptide is Bifunctional protein GlmU (Staphylococcus haemolyticus (strain JCSC1435)).